The chain runs to 594 residues: Zinc finger protein 467 (594 aa).

Residues 1–70 (MRETLEALNS…HTEQAEAPCM (70 aa)) form a disordered region. Residue Lys-97 forms a Glycyl lysine isopeptide (Lys-Gly) (interchain with G-Cter in SUMO2) linkage. C2H2-type zinc fingers lie at residues 160–182 (YGCE…QRLH), 188–210 (CACP…QRSH), 216–238 (FPCS…LRTH), 244–266 (YPCA…QKTH), 272–294 (FPCT…QRIH), 300–322 (YQCT…QRVH), 355–377 (FACS…QSLH), 430–452 (FFCP…RRVH), 458–480 (FACA…SRAH), 486–508 (FACA…QAVH), 514–536 (HACA…QAIH), and 542–564 (FSCP…QRIH). Residues 313–350 (QHLVRHQRVHDAASRTRSSPDIPATPHPPTASLAPSPT) form a disordered region. Lys-368 participates in a covalent cross-link: Glycyl lysine isopeptide (Lys-Gly) (interchain with G-Cter in SUMO2).

Belongs to the krueppel C2H2-type zinc-finger protein family. As to quaternary structure, interacts with STAT3. Enhances STAT3 activity by keeping it in the nucleus.

It is found in the nucleus. In terms of biological role, transcription factor that promotes adipocyte differentiation and suppresses osteoblast differentiation in the bone marrow. Enhances the osteoclast-supporting ability of stromal cells. Binds with STAT3 the consensus sequence 5'-CTTCTGGGAAGA-3' of the acute phase response element (APRE). Transactivates several promoters including FOS, OSM and PPARG. Recruits a histone deacetylase complex. This Rattus norvegicus (Rat) protein is Zinc finger protein 467 (Znf467).